Reading from the N-terminus, the 595-residue chain is Glycine betaine transporter BetP (595 aa).

Topologically, residues methionine 1 to asparagine 59 are cytoplasmic. Residues tryptophan 60–phenylalanine 80 form a helical membrane-spanning segment. The Periplasmic segment spans residues lysine 81 to asparagine 98. Residues leucine 99 to alanine 119 form a helical membrane-spanning segment. Residues serine 120–arginine 137 lie on the Cytoplasmic side of the membrane. A helical transmembrane segment spans residues threonine 138–glycine 158. Alanine 147, alanine 148, and methionine 150 together coordinate Na(+). Isoleucine 152–glycine 153 lines the glycine betaine pocket. Topologically, residues threonine 159–threonine 185 are periplasmic. Residues methionine 186–tyrosine 206 traverse the membrane as a helical segment. Residues serine 207–lysine 236 lie on the Cytoplasmic side of the membrane. The chain crosses the membrane as a helical span at residues leucine 237–glycine 257. Serine 253 lines the glycine betaine pocket. Topologically, residues alanine 258–aspartate 276 are periplasmic. Residues tryptophan 277–serine 296 form a helical membrane-spanning segment. Residues glycine 297 to glycine 299 lie on the Cytoplasmic side of the membrane. Residues lysine 300–valine 323 traverse the membrane as a helical segment. Positions 306 and 310 each coordinate Na(+). Over glycine 324–serine 365 the chain is Periplasmic. Residues tryptophan 366 to alanine 386 traverse the membrane as a helical segment. Tryptophan 373–tryptophan 377 is a glycine betaine binding site. Topologically, residues arginine 387–glutamate 396 are cytoplasmic. The chain crosses the membrane as a helical span at residues phenylalanine 397–glycine 417. Residues glycine 418–glutamine 451 are Periplasmic-facing. The chain crosses the membrane as a helical span at residues isoleucine 452–methionine 476. At glycine 477–lysine 489 the chain is on the cytoplasmic side. A helical transmembrane segment spans residues tryptophan 490–glycine 510. The Periplasmic portion of the chain corresponds to glycine 511–asparagine 520. The helical transmembrane segment at valine 521 to valine 541 threads the bilayer. The Cytoplasmic segment spans residues lysine 542–arginine 595. Residues histidine 570–arginine 595 form a disordered region. Positions lysine 581–arginine 595 are enriched in basic residues.

It belongs to the BCCT transporter (TC 2.A.15) family. As to quaternary structure, homotrimer. The monomer can accumulate glycine betaine, but trimerization is required to properly respond to osmotic stress.

It is found in the cell inner membrane. Uptake is activated by hyperosmotic stress. Osmoresponsive activation is triggered by a change in the internal K(+) concentration. In addition, shows a pronounced chill stimulation, at temperatures around 10 degrees Celsius. Chill activation may be influenced by the membrane lipid composition. Uptake is completely abolished by the uncoupler CCCP, and to a different extent by the ionophores valinomycin and nigericin. Its function is as follows. Involved in response to osmotic stress. High-affinity glycine betaine-specific uptake system, which couples the uptake of glycine betaine to the symport of two Na(+) ions. Transport is driven both by the Na(+) gradient and by the electrical potential. In addition, functions both as an osmosensor and as an osmoregulator that transduces signal to the catalytic part of the carrier protein, which adapts its activity to the extent of osmotic stress. This Corynebacterium glutamicum (strain ATCC 13032 / DSM 20300 / JCM 1318 / BCRC 11384 / CCUG 27702 / LMG 3730 / NBRC 12168 / NCIMB 10025 / NRRL B-2784 / 534) protein is Glycine betaine transporter BetP.